A 251-amino-acid chain; its full sequence is Hydroxyacylglutathione hydrolase (251 aa).

7 residues coordinate Zn(2+): His-53, His-55, Asp-57, His-58, His-110, Asp-127, and His-165.

This sequence belongs to the metallo-beta-lactamase superfamily. Glyoxalase II family. In terms of assembly, monomer. It depends on Zn(2+) as a cofactor.

It carries out the reaction an S-(2-hydroxyacyl)glutathione + H2O = a 2-hydroxy carboxylate + glutathione + H(+). Its pathway is secondary metabolite metabolism; methylglyoxal degradation; (R)-lactate from methylglyoxal: step 2/2. Its function is as follows. Thiolesterase that catalyzes the hydrolysis of S-D-lactoyl-glutathione to form glutathione and D-lactic acid. In Salmonella arizonae (strain ATCC BAA-731 / CDC346-86 / RSK2980), this protein is Hydroxyacylglutathione hydrolase.